The sequence spans 76 residues: Conotoxin Bu28 (76 aa).

The first 24 residues, 1 to 24 (MTSVQSATCCCLLWLVLCVQLVTP), serve as a signal peptide directing secretion. Positions 25-39 (DSPATAQLSRHLTAR) are excised as a propeptide. Disulfide bonds link Cys-50-Cys-63 and Cys-54-Cys-65. Arg-69 is subject to Arginine amide. A propeptide spanning residues 71-76 (VVSSSI) is cleaved from the precursor.

Belongs to the conotoxin J superfamily. In terms of tissue distribution, expressed by the venom duct.

The protein resides in the secreted. Highly inhibits both nicotinic acetylcholine receptors (neuronal (alpha-3/beta-4) and muscular (alpha-1/beta-1/epsilon/delta) subtypes) and the voltage-gated potassium channel Kv1.6/KCNA6 subtype. This is Conotoxin Bu28 from Conus bullatus (Bubble cone).